Here is a 113-residue protein sequence, read N- to C-terminus: U11-theraphotoxin-Hhn1a (113 aa).

Positions 1–21 (MNTVRVTFLLVFVLAVSLGQA) are cleaved as a signal peptide. A propeptide spanning residues 22 to 74 (DKDENRMEMQEKTEQGESYLDFAENLLLQKLEELEAKLLEEDSEESRNSRQKR) is cleaved from the precursor. Intrachain disulfides connect Cys-75–Cys-90, Cys-82–Cys-95, and Cys-89–Cys-110.

This sequence belongs to the neurotoxin 14 (magi-1) family. 01 (HNTX-16) subfamily. In terms of tissue distribution, expressed by the venom gland.

It is found in the secreted. In terms of biological role, probable ion channel inhibitor. This is U11-theraphotoxin-Hhn1a from Cyriopagopus hainanus (Chinese bird spider).